Here is a 218-residue protein sequence, read N- to C-terminus: Thyroid hormone receptor alpha (218 aa).

The NR LBD domain maps to 1–215; the sequence is PEDIGQSPGV…PPLFLEVFED (215 aa). Residues R36 and S85 each contribute to the 3,3',5-triiodo-L-thyronine site.

It belongs to the nuclear hormone receptor family. NR1 subfamily.

It localises to the nucleus. Nuclear hormone receptor that can act as a repressor or activator of transcription. High affinity receptor for thyroid hormones, including triiodothyronine and thyroxine. The chain is Thyroid hormone receptor alpha (thra) from Oncorhynchus mykiss (Rainbow trout).